The sequence spans 356 residues: Activating signal cointegrator 1 complex subunit 1 (356 aa).

Residues 1-52 (MDVLRPQIVTFDGRNYRKNPIQEKQYQHEEDEDFYPDSMEYSDEPCGAYEVA) are required for interaction with ASCC3. Residues 57–119 (GFRATVSAPS…NGVVSARTRI (63 aa)) form the KH domain.

As to quaternary structure, identified in the ASCC complex that contains ASCC1, ASCC2 and ASCC3. Interacts directly with ASCC3. The ASCC complex interacts with ALKBH3. Part of the ASC-1 complex, that contains TRIP4, ASCC1, ASCC2 and ASCC3. Interacts with CSRP1. Interacts with ZCCHC4. As to expression, expressed in the spinal cord, brain, paraspinal ganglia, thyroid, and submandibular glands.

It localises to the nucleus. Its subcellular location is the nucleus speckle. Functionally, plays a role in DNA damage repair as component of the ASCC complex. Part of the ASC-1 complex that enhances NF-kappa-B, SRF and AP1 transactivation. In cells responding to gastrin-activated paracrine signals, it is involved in the induction of SERPINB2 expression by gastrin. May also play a role in the development of neuromuscular junction. This is Activating signal cointegrator 1 complex subunit 1 (Ascc1) from Mus musculus (Mouse).